The chain runs to 386 residues: Patatin-2-Kuras 2 (386 aa).

An N-terminal signal peptide occupies residues 1–23 (MATTKSFLILFFMILATTSSTCA). The region spanning 32–229 (LSIDGGGIKG…TVGDPALLSL (198 aa)) is the PNPLA domain. Positions 36–41 (GGGIKG) match the GXGXXG motif. Positions 75-79 (GTSTG) match the GXSXG motif. Residue Ser-77 is the Nucleophile of the active site. N-linked (GlcNAc...) asparagine glycosylation occurs at Asn-115. Asp-215 functions as the Proton acceptor in the catalytic mechanism. The short motif at 215-217 (DGA) is the DGA/G element. The stretch at 321–384 (ENALTGTTTE…DRKKLRANKA (64 aa)) forms a coiled coil.

This sequence belongs to the patatin family.

The protein localises to the vacuole. Its function is as follows. Probable lipolytic acyl hydrolase (LAH), an activity which is thought to be involved in the response of tubers to pathogens. The sequence is that of Patatin-2-Kuras 2 (pat2-k2) from Solanum tuberosum (Potato).